The following is a 328-amino-acid chain: MINIAIDAMGGDFGEKPIIEGVLKALETKPFNAILVGNSKILKPLIPKKLEQYIQYEEASEIFSMNGNATDALKNKETTIYKAINLLKEKKVDAVVSAGHSGASMSLATLKLGRLKGISRPAIATLMPNIVNKTLLLDVGANTDCKAENLFQFAIMGEVYAREIMQIQKPRLALLSNGEEECKGNELTKESHQLMKKIPNFIGNAEGRDIFNGEIDVLVCDGFDGNVILKACEGVATAIFQLLKNEVKQSFISKIGALLMKPSFKKLKKHTDWQEYGGAPLLGVNGCVIISHGKSDSRAIKNAIFQAINFSQSHINKFIENELGKYNA.

The protein belongs to the PlsX family. In terms of assembly, homodimer. Probably interacts with PlsY.

The protein localises to the cytoplasm. It carries out the reaction a fatty acyl-[ACP] + phosphate = an acyl phosphate + holo-[ACP]. Its pathway is lipid metabolism; phospholipid metabolism. Catalyzes the reversible formation of acyl-phosphate (acyl-PO(4)) from acyl-[acyl-carrier-protein] (acyl-ACP). This enzyme utilizes acyl-ACP as fatty acyl donor, but not acyl-CoA. This Campylobacter jejuni subsp. jejuni serotype O:2 (strain ATCC 700819 / NCTC 11168) protein is Phosphate acyltransferase.